A 386-amino-acid chain; its full sequence is Protein U3 (386 aa).

The protein is Protein U3 (U3) of Human herpesvirus 6B (strain Z29) (HHV-6 variant B).